Consider the following 445-residue polypeptide: 3-phosphoshikimate 1-carboxyvinyltransferase (445 aa).

The interval 1-24 (MEHAATLPQTSRRPATPLTGTITV) is disordered. Positions 7–22 (LPQTSRRPATPLTGTI) are enriched in polar residues. Residues lysine 28, serine 29, and arginine 33 each contribute to the 3-phosphoshikimate site. Position 28 (lysine 28) interacts with phosphoenolpyruvate. 2 residues coordinate phosphoenolpyruvate: glycine 101 and arginine 129. 4 residues coordinate 3-phosphoshikimate: serine 174, glutamine 176, aspartate 326, and lysine 353. Glutamine 176 is a phosphoenolpyruvate binding site. Catalysis depends on aspartate 326, which acts as the Proton acceptor. Phosphoenolpyruvate is bound by residues arginine 357 and arginine 399.

Belongs to the EPSP synthase family. Monomer.

The protein resides in the cytoplasm. It carries out the reaction 3-phosphoshikimate + phosphoenolpyruvate = 5-O-(1-carboxyvinyl)-3-phosphoshikimate + phosphate. It functions in the pathway metabolic intermediate biosynthesis; chorismate biosynthesis; chorismate from D-erythrose 4-phosphate and phosphoenolpyruvate: step 6/7. Functionally, catalyzes the transfer of the enolpyruvyl moiety of phosphoenolpyruvate (PEP) to the 5-hydroxyl of shikimate-3-phosphate (S3P) to produce enolpyruvyl shikimate-3-phosphate and inorganic phosphate. In Acidiphilium cryptum (strain JF-5), this protein is 3-phosphoshikimate 1-carboxyvinyltransferase.